Consider the following 192-residue polypeptide: Fe/S biogenesis protein NfuA (192 aa).

[4Fe-4S] cluster contacts are provided by Cys150 and Cys153.

The protein belongs to the NfuA family. As to quaternary structure, homodimer. It depends on [4Fe-4S] cluster as a cofactor.

Its function is as follows. Involved in iron-sulfur cluster biogenesis. Binds a 4Fe-4S cluster, can transfer this cluster to apoproteins, and thereby intervenes in the maturation of Fe/S proteins. Could also act as a scaffold/chaperone for damaged Fe/S proteins. The sequence is that of Fe/S biogenesis protein NfuA from Ruthia magnifica subsp. Calyptogena magnifica.